The primary structure comprises 365 residues: Protein Tob1 (365 aa).

The short motif at 22–39 is the Bipartite nuclear localization signal element; it reads RRRVNIFGEELERLLKQK. The interval 82–92 is important for nuclear localization; the sequence is VRGNLPQDLSV. Residues 144 to 160 show a composition bias toward low complexity; the sequence is DPASSVSSSPSPPFGHS. The segment at 144–171 is disordered; the sequence is DPASSVSSSPSPPFGHSAAVSPTFMPRS. A required for interaction with CPEB3 region spans residues 161–220; that stretch reads AAVSPTFMPRSTQPLTFTTATFAATKFGSTKMKNSGRSSKVARTSPISLGLNVNVNDLLK. A Phosphothreonine modification is found at T204. The Nuclear export signal signature appears at 228 to 236; it reads MHSLYGLGL. The tract at residues 233-287 is disordered; that stretch reads GLGLGSQQQPQPQPQQPPSQPPPPPPPPQQQQQHQQQQQQQQQQQQQPQQQTSAL. The span at 243–261 shows a compositional bias: pro residues; the sequence is QPQPQQPPSQPPPPPPPPQ. Over residues 262–283 the composition is skewed to low complexity; it reads QQQQHQQQQQQQQQQQQQPQQQ.

Belongs to the BTG family. As to quaternary structure, interacts with ERBB2. Interacts with CNOT7. Interacts with CPEB3 (via C-terminal RNA-binding region); recruits CNOT7 to CPEB3 to form a ternary complex required for mRNA deadenylation and decay. Interacts with CNOT8. Interacts with CPEB4. In terms of processing, phosphorylated on Ser and Thr residues.

The protein localises to the cytoplasm. The protein resides in the nucleus. Functionally, anti-proliferative protein; the function is mediated by association with deadenylase subunits of the CCR4-NOT complex. Mediates CPEB3-accelerated mRNA deadenylation by binding to CPEB3 and recruiting CNOT7 which leads to target mRNA deadenylation and decay. This is Protein Tob1 (Tob1) from Rattus norvegicus (Rat).